The primary structure comprises 136 residues: T-cell receptor alpha chain constant (136 aa).

An Ig-like C1-type domain is found at 19 to 103; sequence STLCLFTDFD…LTEKSFETDM (85 aa). C22 and C72 are joined by a disulfide. N-linked (GlcNAc...) asparagine glycosylation is found at N66, N80, and N109. Positions 90–111 are connecting peptide; the sequence is CDATLTEKSFETDMNLNFQNLS. The helical transmembrane segment at 111–131 threads the bilayer; sequence SVMGLRILLLKVAGFNLLMTL. At 132–136 the chain is on the cytoplasmic side; sequence RLWSS.

Alpha-beta TR is a heterodimer composed of an alpha and beta chain; disulfide-linked. The alpha-beta TR is associated with the transmembrane signaling CD3 coreceptor proteins to form the TR-CD3 (TcR or TCR). The assembly of alpha-beta TR heterodimers with CD3 occurs in the endoplasmic reticulum where a single alpha-beta TR heterodimer associates with one CD3D-CD3E heterodimer, one CD3G-CD3E heterodimer and one CD247 homodimer forming a stable octameric structure. CD3D-CD3E and CD3G-CD3E heterodimers preferentially associate with TR alpha and TR beta chains, respectively. The association of the CD247 homodimer is the last step of TcR assembly in the endoplasmic reticulum and is required for transport to the cell surface.

It is found in the cell membrane. In terms of biological role, constant region of T cell receptor (TR) alpha chain. Alpha-beta T cell receptors are antigen specific receptors which are essential to the immune response and are present on the cell surface of T lymphocytes. Recognize peptide-major histocompatibility (MH) (pMH) complexes that are displayed by antigen presenting cells (APC), a prerequisite for efficient T cell adaptive immunity against pathogens. Binding of alpha-beta TR to pMH complex initiates TR-CD3 clustering on the cell surface and intracellular activation of LCK that phosphorylates the ITAM motifs of CD3G, CD3D, CD3E and CD247 enabling the recruitment of ZAP70. In turn, ZAP70 phosphorylates LAT, which recruits numerous signaling molecules to form the LAT signalosome. The LAT signalosome propagates signal branching to three major signaling pathways, the calcium, the mitogen-activated protein kinase (MAPK) kinase and the nuclear factor NF-kappa-B (NF-kB) pathways, leading to the mobilization of transcription factors that are critical for gene expression and essential for T cell growth and differentiation. The T cell repertoire is generated in the thymus, by V-(D)-J rearrangement. This repertoire is then shaped by intrathymic selection events to generate a peripheral T cell pool of self-MH restricted, non-autoaggressive T cells. Post-thymic interaction of alpha-beta TR with the pMH complexes shapes TR structural and functional avidity. In Mus musculus (Mouse), this protein is T-cell receptor alpha chain constant.